A 100-amino-acid chain; its full sequence is NADH-quinone oxidoreductase subunit K (100 aa).

Helical transmembrane passes span T4–I24, L29–F49, and I60–L80.

The protein belongs to the complex I subunit 4L family. In terms of assembly, NDH-1 is composed of 14 different subunits. Subunits NuoA, H, J, K, L, M, N constitute the membrane sector of the complex.

The protein resides in the cell membrane. It catalyses the reaction a quinone + NADH + 5 H(+)(in) = a quinol + NAD(+) + 4 H(+)(out). NDH-1 shuttles electrons from NADH, via FMN and iron-sulfur (Fe-S) centers, to quinones in the respiratory chain. The immediate electron acceptor for the enzyme in this species is believed to be ubiquinone. Couples the redox reaction to proton translocation (for every two electrons transferred, four hydrogen ions are translocated across the cytoplasmic membrane), and thus conserves the redox energy in a proton gradient. This Roseiflexus sp. (strain RS-1) protein is NADH-quinone oxidoreductase subunit K.